Here is a 339-residue protein sequence, read N- to C-terminus: Phenylalanine--tRNA ligase alpha subunit (339 aa).

Mg(2+) is bound at residue E254.

It belongs to the class-II aminoacyl-tRNA synthetase family. Phe-tRNA synthetase alpha subunit type 1 subfamily. As to quaternary structure, tetramer of two alpha and two beta subunits. Requires Mg(2+) as cofactor.

It is found in the cytoplasm. It catalyses the reaction tRNA(Phe) + L-phenylalanine + ATP = L-phenylalanyl-tRNA(Phe) + AMP + diphosphate + H(+). The polypeptide is Phenylalanine--tRNA ligase alpha subunit (Desulforudis audaxviator (strain MP104C)).